The following is a 198-amino-acid chain: dTTP/UTP pyrophosphatase (198 aa).

Residue Asp72 is the Proton acceptor of the active site.

Belongs to the Maf family. YhdE subfamily. The cofactor is a divalent metal cation.

It is found in the cytoplasm. The catalysed reaction is dTTP + H2O = dTMP + diphosphate + H(+). It carries out the reaction UTP + H2O = UMP + diphosphate + H(+). Its function is as follows. Nucleoside triphosphate pyrophosphatase that hydrolyzes dTTP and UTP. May have a dual role in cell division arrest and in preventing the incorporation of modified nucleotides into cellular nucleic acids. The protein is dTTP/UTP pyrophosphatase of Pseudomonas fluorescens (strain Pf0-1).